Reading from the N-terminus, the 379-residue chain is Queuine tRNA-ribosyltransferase (379 aa).

Aspartate 93 functions as the Proton acceptor in the catalytic mechanism. Residues 93–97, aspartate 147, glutamine 191, and glycine 218 contribute to the substrate site; that span reads DSGGF. The interval 249 to 255 is RNA binding; the sequence is GVGKPED. Aspartate 268 functions as the Nucleophile in the catalytic mechanism. Residues 273 to 277 form an RNA binding; important for wobble base 34 recognition region; sequence TRNAR. Positions 306, 308, 311, and 337 each coordinate Zn(2+).

It belongs to the queuine tRNA-ribosyltransferase family. In terms of assembly, homodimer. Within each dimer, one monomer is responsible for RNA recognition and catalysis, while the other monomer binds to the replacement base PreQ1. The cofactor is Zn(2+).

It carries out the reaction 7-aminomethyl-7-carbaguanine + guanosine(34) in tRNA = 7-aminomethyl-7-carbaguanosine(34) in tRNA + guanine. The protein operates within tRNA modification; tRNA-queuosine biosynthesis. Catalyzes the base-exchange of a guanine (G) residue with the queuine precursor 7-aminomethyl-7-deazaguanine (PreQ1) at position 34 (anticodon wobble position) in tRNAs with GU(N) anticodons (tRNA-Asp, -Asn, -His and -Tyr). Catalysis occurs through a double-displacement mechanism. The nucleophile active site attacks the C1' of nucleotide 34 to detach the guanine base from the RNA, forming a covalent enzyme-RNA intermediate. The proton acceptor active site deprotonates the incoming PreQ1, allowing a nucleophilic attack on the C1' of the ribose to form the product. After dissociation, two additional enzymatic reactions on the tRNA convert PreQ1 to queuine (Q), resulting in the hypermodified nucleoside queuosine (7-(((4,5-cis-dihydroxy-2-cyclopenten-1-yl)amino)methyl)-7-deazaguanosine). The protein is Queuine tRNA-ribosyltransferase of Mannheimia succiniciproducens (strain KCTC 0769BP / MBEL55E).